Reading from the N-terminus, the 251-residue chain is Flap endonuclease Xni (251 aa).

Asp104 contributes to the Mg(2+) binding site. A 5'-3' exonuclease domain is found at 160–249; the sequence is VSPGQLADFW…LDGNLQQLRL (90 aa). K(+) contacts are provided by Leu171, Ala172, Pro180, Val182, and Ile185. Residues 184-189 form an interaction with DNA region; sequence GIGPKS.

Belongs to the Xni family. The cofactor is Mg(2+). K(+) is required as a cofactor.

Its function is as follows. Has flap endonuclease activity. During DNA replication, flap endonucleases cleave the 5'-overhanging flap structure that is generated by displacement synthesis when DNA polymerase encounters the 5'-end of a downstream Okazaki fragment. This is Flap endonuclease Xni from Cronobacter sakazakii (strain ATCC BAA-894) (Enterobacter sakazakii).